The following is a 193-amino-acid chain: Probable nicotinate-nucleotide adenylyltransferase (193 aa).

This sequence belongs to the NadD family.

It carries out the reaction nicotinate beta-D-ribonucleotide + ATP + H(+) = deamido-NAD(+) + diphosphate. Its pathway is cofactor biosynthesis; NAD(+) biosynthesis; deamido-NAD(+) from nicotinate D-ribonucleotide: step 1/1. In terms of biological role, catalyzes the reversible adenylation of nicotinate mononucleotide (NaMN) to nicotinic acid adenine dinucleotide (NaAD). The sequence is that of Probable nicotinate-nucleotide adenylyltransferase from Fusobacterium nucleatum subsp. nucleatum (strain ATCC 25586 / DSM 15643 / BCRC 10681 / CIP 101130 / JCM 8532 / KCTC 2640 / LMG 13131 / VPI 4355).